Reading from the N-terminus, the 715-residue chain is Discoidin, CUB and LCCL domain-containing protein 1 (715 aa).

The first 34 residues, 1–34 (MVPGARGGGALARAAGRGLLALLLAVSAPLRLQA), serve as a signal peptide directing secretion. The Extracellular segment spans residues 35 to 459 (EELGDGCGHL…TSTGINITTV (425 aa)). 2 cysteine pairs are disulfide-bonded: Cys-41-Cys-68 and Cys-94-Cys-112. The region spanning 41 to 150 (CGHLVTYQDS…RGFLLTYASS (110 aa)) is the CUB domain. N-linked (GlcNAc...) asparagine glycosylation occurs at Asn-64. Residue Asn-124 is glycosylated (N-linked (GlcNAc...) asparagine). Residues 152–248 (HPDLITCLER…RDGSLSDKRF (97 aa)) form the LCCL domain. 2 disulfides stabilise this stretch: Cys-158/Cys-174 and Cys-178/Cys-200. The region spanning 248-412 (FLFTSNGCSR…IALKVELIGC (165 aa)) is the F5/8 type C domain. Asn-277 carries N-linked (GlcNAc...) asparagine glycosylation. A disordered region spans residues 278 to 312 (ESGDQVHWSPGQARLQDQGPSWASGDSSNNHKPRE). Polar residues predominate over residues 295-307 (QGPSWASGDSSNN). Residues Asn-351, Asn-418, and Asn-455 are each glycosylated (N-linked (GlcNAc...) asparagine). Residues 460 to 480 (AIPLVLLVVLVFAGMGIFAAF) form a helical membrane-spanning segment. Residues 481-715 (RKKKKKGSPY…LNQTAMTALL (235 aa)) lie on the Cytoplasmic side of the membrane. Ser-513 is modified (phosphoserine). Phosphothreonine is present on Thr-614. The interval 619 to 702 (SGYRVPGPQP…SDSYSAPRDC (84 aa)) is disordered.

It is found in the membrane. The sequence is that of Discoidin, CUB and LCCL domain-containing protein 1 (DCBLD1) from Homo sapiens (Human).